The sequence spans 481 residues: F-box protein At1g49360 (481 aa).

The region spanning 105 to 156 (LKEDLFLPSDLVRLILSRLSFKDNIRSSTVCKAWGDIAASVRVKSRRCWLLY) is the F-box domain.

This chain is F-box protein At1g49360, found in Arabidopsis thaliana (Mouse-ear cress).